A 196-amino-acid chain; its full sequence is ATP-dependent Clp protease proteolytic subunit (196 aa).

The Nucleophile role is filled by serine 97. Histidine 122 is a catalytic residue.

It belongs to the peptidase S14 family. Fourteen ClpP subunits assemble into 2 heptameric rings which stack back to back to give a disk-like structure with a central cavity, resembling the structure of eukaryotic proteasomes.

The protein resides in the cytoplasm. The catalysed reaction is Hydrolysis of proteins to small peptides in the presence of ATP and magnesium. alpha-casein is the usual test substrate. In the absence of ATP, only oligopeptides shorter than five residues are hydrolyzed (such as succinyl-Leu-Tyr-|-NHMec, and Leu-Tyr-Leu-|-Tyr-Trp, in which cleavage of the -Tyr-|-Leu- and -Tyr-|-Trp bonds also occurs).. In terms of biological role, cleaves peptides in various proteins in a process that requires ATP hydrolysis. Has a chymotrypsin-like activity. Plays a major role in the degradation of misfolded proteins. This Lacticaseibacillus paracasei (strain ATCC 334 / BCRC 17002 / CCUG 31169 / CIP 107868 / KCTC 3260 / NRRL B-441) (Lactobacillus paracasei) protein is ATP-dependent Clp protease proteolytic subunit.